We begin with the raw amino-acid sequence, 483 residues long: Endoplasmic reticulum lectin 1 (483 aa).

A signal peptide spans 1 to 33; that stretch reads MEEGDGGLRSLVPGGPLLLVLYGLLEASGGGRA. 2 consecutive MRH domains span residues 111–246 and 342–469; these read SSCS…LCSH and SYCF…ICKI. C113 and C126 are joined by a disulfide. N-linked (GlcNAc...) asparagine glycosylation is present at N195. 5 disulfides stabilise this stretch: C199–C232, C215–C244, C344–C357, C421–C455, and C436–C467.

As to quaternary structure, may form a complex with OS9, HSPA5, SYVN1, and SEL1L with which it interacts directly. Interacts (via PRKCSH 2 domain) with KREMEN2 (when glycosylated). Interacts with HSPA5. In terms of processing, N-glycosylated.

It is found in the endoplasmic reticulum lumen. Its function is as follows. Probable lectin that binds selectively to improperly folded lumenal proteins. May function in endoplasmic reticulum quality control and endoplasmic reticulum-associated degradation (ERAD) of both non-glycosylated proteins and glycoproteins. The sequence is that of Endoplasmic reticulum lectin 1 (Erlec1) from Mus musculus (Mouse).